The primary structure comprises 500 residues: Glycerol kinase (500 aa).

Thr-17 serves as a coordination point for ADP. ATP-binding residues include Thr-17, Thr-18, and Ser-19. Thr-17 is a binding site for sn-glycerol 3-phosphate. Residue Arg-21 participates in ADP binding. Sn-glycerol 3-phosphate-binding residues include Arg-87, Glu-88, Tyr-139, and Asp-243. Glycerol-binding residues include Arg-87, Glu-88, Tyr-139, Asp-243, and Gln-244. Positions 265 and 308 each coordinate ADP. ATP-binding residues include Thr-265, Gly-308, Gln-312, and Gly-409. ADP contacts are provided by Gly-409 and Asn-413.

The protein belongs to the FGGY kinase family.

The catalysed reaction is glycerol + ATP = sn-glycerol 3-phosphate + ADP + H(+). Its pathway is polyol metabolism; glycerol degradation via glycerol kinase pathway; sn-glycerol 3-phosphate from glycerol: step 1/1. With respect to regulation, inhibited by fructose 1,6-bisphosphate (FBP). Functionally, key enzyme in the regulation of glycerol uptake and metabolism. Catalyzes the phosphorylation of glycerol to yield sn-glycerol 3-phosphate. This Pseudomonas fluorescens (strain Pf0-1) protein is Glycerol kinase.